Here is a 132-residue protein sequence, read N- to C-terminus: Galectin-2 (132 aa).

Positions 4 to 131 (ELEVKNMDMK…GFNMSSFKLK (128 aa)) constitute a Galectin domain. 65-71 (WGQEQRE) is a binding site for a beta-D-galactoside.

As to quaternary structure, homodimer.

In terms of biological role, this protein binds beta-galactoside. Its physiological function is not yet known. This is Galectin-2 (LGALS2) from Homo sapiens (Human).